The following is a 202-amino-acid chain: Cytochrome c oxidase assembly protein CtaG (202 aa).

The Cytoplasmic segment spans residues 1 to 14; that stretch reads MTSPANPSEVTRDR. Residues 15–37 traverse the membrane as a helical; Signal-anchor for type II membrane protein segment; it reads RNRGVAFVCAGVFVAMVGMSFAA. Topologically, residues 38–202 are periplasmic; the sequence is VPLYRLFCQV…GAAKTQKLGG (165 aa).

Belongs to the COX11/CtaG family.

It is found in the cell inner membrane. Functionally, exerts its effect at some terminal stage of cytochrome c oxidase synthesis, probably by being involved in the insertion of the copper B into subunit I. The polypeptide is Cytochrome c oxidase assembly protein CtaG (Chelativorans sp. (strain BNC1)).